The primary structure comprises 148 residues: Small ribosomal subunit protein eS19 (148 aa).

The segment covering 79–90 has biased composition (basic residues); that stretch reads HGSTKNRGSRPA. 2 disordered regions span residues 79-98 and 116-148; these read HGST…ASGA and DEEK…EDDE. Basic and acidic residues predominate over residues 130 to 140; sequence RDLDRIAKTTV.

The protein belongs to the eukaryotic ribosomal protein eS19 family.

The sequence is that of Small ribosomal subunit protein eS19 (rps19) from Emericella nidulans (strain FGSC A4 / ATCC 38163 / CBS 112.46 / NRRL 194 / M139) (Aspergillus nidulans).